Here is a 533-residue protein sequence, read N- to C-terminus: Probable dolichyl pyrophosphate Man9GlcNAc2 alpha-1,3-glucosyltransferase (533 aa).

The tract at residues 1-20 is disordered; the sequence is MPKKKPAKHSGEDDITIPVS. 9 helical membrane-spanning segments follow: residues 42–64, 149–169, 184–204, 214–234, 264–284, 360–380, 422–442, 463–483, and 491–511; these read FLCISLFALLIRSAVTMYPYSGA, WTVLSSDAFIFFPAALFFVLV, WHIAMILLNPCLILIDHGHFQ, VGAIAAVLCESEVLTCVLFSL, ILSVIKLGIAVIVTFVIFWWP, GFLYGLLNSSMAFYLFSFQVH, LLIPYLTLSFLFTVIYHSPGN, VFLLRTHFFISVVLHVLYLTI, and FLFEALIMILCFSYFIMFAFY.

The protein belongs to the ALG6/ALG8 glucosyltransferase family.

The protein localises to the endoplasmic reticulum membrane. It carries out the reaction an alpha-D-Man-(1-&gt;2)-alpha-D-Man-(1-&gt;2)-alpha-D-Man-(1-&gt;3)-[alpha-D-Man-(1-&gt;2)-alpha-D-Man-(1-&gt;3)-[alpha-D-Man-(1-&gt;2)-alpha-D-Man-(1-&gt;6)]-alpha-D-Man-(1-&gt;6)]-beta-D-Man-(1-&gt;4)-beta-D-GlcNAc-(1-&gt;4)-alpha-D-GlcNAc-diphospho-di-trans,poly-cis-dolichol + a di-trans,poly-cis-dolichyl beta-D-glucosyl phosphate = an alpha-D-Glc-(1-&gt;3)-alpha-D-Man-(1-&gt;2)-alpha-D-Man-(1-&gt;2)-alpha-D-Man-(1-&gt;3)-[alpha-D-Man-(1-&gt;2)-alpha-D-Man-(1-&gt;3)-[alpha-D-Man-(1-&gt;2)-alpha-D-Man-(1-&gt;6)]-alpha-D-Man-(1-&gt;6)]-beta-D-Man-(1-&gt;4)-beta-D-GlcNAc-(1-&gt;4)-alpha-D-GlcNAc-diphospho-di-trans,poly-cis-dolichol + a di-trans,poly-cis-dolichyl phosphate + H(+). Its pathway is protein modification; protein glycosylation. Its function is as follows. Adds the first glucose residue to the lipid-linked oligosaccharide precursor for N-linked glycosylation. Transfers glucose from dolichyl phosphate glucose (Dol-P-Glc) onto the lipid-linked oligosaccharide Man(9)GlcNAc(2)-PP-Dol. The sequence is that of Probable dolichyl pyrophosphate Man9GlcNAc2 alpha-1,3-glucosyltransferase from Arabidopsis thaliana (Mouse-ear cress).